The following is a 320-amino-acid chain: Beta-carotene 3-hydroxylase, chloroplastic (320 aa).

A chloroplast-targeting transit peptide spans 1 to 78 (METQFLVSGR…EKELRGKLVV (78 aa)). The next 2 helical transmembrane spans lie at 118–138 (YLVAAVMSSFGITSMAVLSVY) and 152–172 (LSEMFGTFALSVGAAVGMEFW). The Fatty acid hydroxylase domain maps to 165 to 292 (AAVGMEFWAR…KFNGVPYGLF (128 aa)). A Histidine box-1 motif is present at residues 177–182 (HEALWH). The Histidine box-2 signature appears at 189 to 193 (HESHH). The next 2 membrane-spanning stretches (helical) occupy residues 204-224 (DIFAIINAVPAIALLSYGFFH) and 228-248 (IPGLCFGAGLGITVFGMAYMF). A Histidine box-3 motif is present at residues 250–255 (HDGLVH). Positions 276-280 (HTLHH) match the Histidine box-4 motif.

This sequence belongs to the sterol desaturase family.

It is found in the plastid. The protein localises to the chloroplast membrane. It catalyses the reaction all-trans-beta-carotene + 4 reduced [2Fe-2S]-[ferredoxin] + 2 O2 + 4 H(+) = all-trans-zeaxanthin + 4 oxidized [2Fe-2S]-[ferredoxin] + 2 H2O. Functionally, nonheme diiron monooxygenase involved in the biosynthesis of xanthophylls. Specific for beta-ring hydroxylations of beta-carotene. Uses ferredoxin as an electron donor. This chain is Beta-carotene 3-hydroxylase, chloroplastic (BHY), found in Gentiana lutea (Yellow gentian).